Consider the following 199-residue polypeptide: dITP/XTP pyrophosphatase (199 aa).

7-12 (TGNAGK) serves as a coordination point for substrate. Catalysis depends on Asp68, which acts as the Proton acceptor. Mg(2+) is bound at residue Asp68. Substrate-binding positions include Ser69, 153-156 (FGYD), Lys176, and 181-182 (HR).

Belongs to the HAM1 NTPase family. In terms of assembly, homodimer. It depends on Mg(2+) as a cofactor.

It catalyses the reaction XTP + H2O = XMP + diphosphate + H(+). The catalysed reaction is dITP + H2O = dIMP + diphosphate + H(+). It carries out the reaction ITP + H2O = IMP + diphosphate + H(+). Pyrophosphatase that catalyzes the hydrolysis of nucleoside triphosphates to their monophosphate derivatives, with a high preference for the non-canonical purine nucleotides XTP (xanthosine triphosphate), dITP (deoxyinosine triphosphate) and ITP. Seems to function as a house-cleaning enzyme that removes non-canonical purine nucleotides from the nucleotide pool, thus preventing their incorporation into DNA/RNA and avoiding chromosomal lesions. This is dITP/XTP pyrophosphatase from Halorhodospira halophila (strain DSM 244 / SL1) (Ectothiorhodospira halophila (strain DSM 244 / SL1)).